The chain runs to 129 residues: Small ribosomal subunit protein uS12 (129 aa).

Residues 1-25 are disordered; it reads MPTYNQLVRFGRKSKTRKTKSPALE. Positions 10-20 are enriched in basic residues; the sequence is FGRKSKTRKTK. A 3-methylthioaspartic acid modification is found at D89. Residues 110-129 are disordered; sequence RKQGRSRYGAPSKQVAVTKK.

It belongs to the universal ribosomal protein uS12 family. As to quaternary structure, part of the 30S ribosomal subunit. Contacts proteins S8 and S17. May interact with IF1 in the 30S initiation complex.

Functionally, with S4 and S5 plays an important role in translational accuracy. Its function is as follows. Interacts with and stabilizes bases of the 16S rRNA that are involved in tRNA selection in the A site and with the mRNA backbone. Located at the interface of the 30S and 50S subunits, it traverses the body of the 30S subunit contacting proteins on the other side and probably holding the rRNA structure together. The combined cluster of proteins S8, S12 and S17 appears to hold together the shoulder and platform of the 30S subunit. This is Small ribosomal subunit protein uS12 from Rickettsia canadensis (strain McKiel).